A 259-amino-acid polypeptide reads, in one-letter code: Dihydroorotate dehydrogenase B (NAD(+)), electron transfer subunit (259 aa).

In terms of domain architecture, FAD-binding FR-type spans 2-102 (MQKQNMIVVN…LGPLGHGFPV (101 aa)). Residues 53-56 (RPIS), 70-72 (LYR), and 77-78 (GT) each bind FAD. Positions 221, 226, 229, and 246 each coordinate [2Fe-2S] cluster.

Belongs to the PyrK family. As to quaternary structure, heterotetramer of 2 PyrK and 2 PyrD type B subunits. [2Fe-2S] cluster serves as cofactor. It depends on FAD as a cofactor.

Its pathway is pyrimidine metabolism; UMP biosynthesis via de novo pathway; orotate from (S)-dihydroorotate (NAD(+) route): step 1/1. Its function is as follows. Responsible for channeling the electrons from the oxidation of dihydroorotate from the FMN redox center in the PyrD type B subunit to the ultimate electron acceptor NAD(+). This is Dihydroorotate dehydrogenase B (NAD(+)), electron transfer subunit from Bacillus cereus (strain G9842).